The sequence spans 337 residues: Dihydroorotate dehydrogenase (quinone) (337 aa).

FMN-binding positions include 58–62 (AGLDK) and T82. K62 lines the substrate pocket. 107-111 (NCMGF) is a substrate binding site. The FMN site is built by N137 and N170. N170 contributes to the substrate binding site. The active-site Nucleophile is S173. N175 is a substrate binding site. K215 and T243 together coordinate FMN. 244–245 (NT) is a substrate binding site. Residues G266, G294, and 315 to 316 (YS) contribute to the FMN site.

It belongs to the dihydroorotate dehydrogenase family. Type 2 subfamily. Monomer. FMN serves as cofactor.

It is found in the cell membrane. The enzyme catalyses (S)-dihydroorotate + a quinone = orotate + a quinol. It participates in pyrimidine metabolism; UMP biosynthesis via de novo pathway; orotate from (S)-dihydroorotate (quinone route): step 1/1. Its function is as follows. Catalyzes the conversion of dihydroorotate to orotate with quinone as electron acceptor. In Dichelobacter nodosus (strain VCS1703A), this protein is Dihydroorotate dehydrogenase (quinone).